A 447-amino-acid polypeptide reads, in one-letter code: Na(+)-translocating NADH-quinone reductase subunit A (447 aa).

The protein belongs to the NqrA family. As to quaternary structure, composed of six subunits; NqrA, NqrB, NqrC, NqrD, NqrE and NqrF.

The enzyme catalyses a ubiquinone + n Na(+)(in) + NADH + H(+) = a ubiquinol + n Na(+)(out) + NAD(+). NQR complex catalyzes the reduction of ubiquinone-1 to ubiquinol by two successive reactions, coupled with the transport of Na(+) ions from the cytoplasm to the periplasm. NqrA to NqrE are probably involved in the second step, the conversion of ubisemiquinone to ubiquinol. The chain is Na(+)-translocating NADH-quinone reductase subunit A from Klebsiella pneumoniae (strain 342).